The following is a 187-amino-acid chain: CASP-like protein 2C1 (187 aa).

At 1 to 14 (MVAAARVVSGVKAE) the chain is on the cytoplasmic side. Residues 15–35 (GLLRGACAALAAAAALLLGLS) form a helical membrane-spanning segment. Residues 36-54 (TQTETVLLVRKKGTVKDVQ) are Extracellular-facing. The helical transmembrane segment at 55-75 (ALWVLAMAAASAAGYHLLQLL) threads the bilayer. Over 76–97 (KCLYLGRGGGRALAWTCLLLDK) the chain is Cytoplasmic. Residues 98 to 118 (ACAYATFATTVAAAQACVVAL) traverse the membrane as a helical segment. Residues 119-139 (DGAHALQWTKLCNIYTRFCEQ) lie on the Extracellular side of the membrane. A helical transmembrane segment spans residues 140–160 (VAGSLVLGMLAAVGTAVLSAA). Topologically, residues 161 to 187 (SARNVFRHYYCSSHSPPAPPPETCDAH) are cytoplasmic.

This sequence belongs to the Casparian strip membrane proteins (CASP) family. In terms of assembly, homodimer and heterodimers.

The protein resides in the cell membrane. This is CASP-like protein 2C1 from Zea mays (Maize).